Here is a 119-residue protein sequence, read N- to C-terminus: Beta-2-microglobulin (119 aa).

Positions 1–20 (MARSVTVIFLVLVSLAVVLA) are cleaved as a signal peptide. The region spanning 25-114 (PQIQVYSRHP…VTLKEPKTVT (90 aa)) is the Ig-like C1-type domain. A disulfide bond links cysteine 45 and cysteine 100.

This sequence belongs to the beta-2-microglobulin family. As to quaternary structure, heterodimer of an alpha chain and a beta chain. Beta-2-microglobulin is the beta-chain of major histocompatibility complex class I molecules. Forms a heterotrimer with MR1 and a metabolite antigen.

The protein resides in the secreted. Component of the class I major histocompatibility complex (MHC). Involved in the presentation of peptide antigens to the immune system. This is Beta-2-microglobulin (B2m) from Rattus norvegicus (Rat).